The following is a 277-amino-acid chain: Large ribosomal subunit protein uL2 (277 aa).

A disordered region spans residues 223-264 (VAMNPVDHPHGGGEGKTAAGRHPVSPWGTPSKGSRTRRNKRT).

The protein belongs to the universal ribosomal protein uL2 family. As to quaternary structure, part of the 50S ribosomal subunit. Forms a bridge to the 30S subunit in the 70S ribosome.

Functionally, one of the primary rRNA binding proteins. Required for association of the 30S and 50S subunits to form the 70S ribosome, for tRNA binding and peptide bond formation. It has been suggested to have peptidyltransferase activity; this is somewhat controversial. Makes several contacts with the 16S rRNA in the 70S ribosome. This Nitrosomonas eutropha (strain DSM 101675 / C91 / Nm57) protein is Large ribosomal subunit protein uL2.